The chain runs to 247 residues: 3-deoxy-manno-octulosonate cytidylyltransferase (247 aa).

It belongs to the KdsB family.

The protein resides in the cytoplasm. It carries out the reaction 3-deoxy-alpha-D-manno-oct-2-ulosonate + CTP = CMP-3-deoxy-beta-D-manno-octulosonate + diphosphate. It participates in nucleotide-sugar biosynthesis; CMP-3-deoxy-D-manno-octulosonate biosynthesis; CMP-3-deoxy-D-manno-octulosonate from 3-deoxy-D-manno-octulosonate and CTP: step 1/1. The protein operates within bacterial outer membrane biogenesis; lipopolysaccharide biosynthesis. In terms of biological role, activates KDO (a required 8-carbon sugar) for incorporation into bacterial lipopolysaccharide in Gram-negative bacteria. This is 3-deoxy-manno-octulosonate cytidylyltransferase from Methylorubrum populi (strain ATCC BAA-705 / NCIMB 13946 / BJ001) (Methylobacterium populi).